The primary structure comprises 156 residues: 3-hydroxyacyl-[acyl-carrier-protein] dehydratase FabZ (156 aa).

Residue histidine 54 is part of the active site.

It belongs to the thioester dehydratase family. FabZ subfamily.

The protein resides in the cytoplasm. The catalysed reaction is a (3R)-hydroxyacyl-[ACP] = a (2E)-enoyl-[ACP] + H2O. Its function is as follows. Involved in unsaturated fatty acids biosynthesis. Catalyzes the dehydration of short chain beta-hydroxyacyl-ACPs and long chain saturated and unsaturated beta-hydroxyacyl-ACPs. This is 3-hydroxyacyl-[acyl-carrier-protein] dehydratase FabZ from Koribacter versatilis (strain Ellin345).